The sequence spans 202 residues: GMP synthase [glutamine-hydrolyzing] subunit A (202 aa).

The Glutamine amidotransferase type-1 domain maps to 4–194; it reads KIYVVDNGGQ…IAICQQHKEK (191 aa). Cys-81 serves as the catalytic Nucleophile. Catalysis depends on residues His-168 and Glu-170.

In terms of assembly, heterodimer composed of a glutamine amidotransferase subunit (A) and a GMP-binding subunit (B).

It carries out the reaction XMP + L-glutamine + ATP + H2O = GMP + L-glutamate + AMP + diphosphate + 2 H(+). It participates in purine metabolism; GMP biosynthesis; GMP from XMP (L-Gln route): step 1/1. In terms of biological role, catalyzes the synthesis of GMP from XMP. This Thermoplasma volcanium (strain ATCC 51530 / DSM 4299 / JCM 9571 / NBRC 15438 / GSS1) protein is GMP synthase [glutamine-hydrolyzing] subunit A.